A 492-amino-acid chain; its full sequence is 3-octaprenyl-4-hydroxybenzoate carboxy-lyase (492 aa).

Position 175 (Asn175) interacts with Mn(2+). Residues 178–180, 192–194, and 197–198 each bind prenylated FMN; these read IYR, RWL, and RG. Glu241 lines the Mn(2+) pocket. Asp290 functions as the Proton donor in the catalytic mechanism.

It belongs to the UbiD family. Homohexamer. The cofactor is prenylated FMN. It depends on Mn(2+) as a cofactor.

It localises to the cell membrane. It catalyses the reaction a 4-hydroxy-3-(all-trans-polyprenyl)benzoate + H(+) = a 2-(all-trans-polyprenyl)phenol + CO2. Its pathway is cofactor biosynthesis; ubiquinone biosynthesis. Catalyzes the decarboxylation of 3-octaprenyl-4-hydroxy benzoate to 2-octaprenylphenol, an intermediate step in ubiquinone biosynthesis. The polypeptide is 3-octaprenyl-4-hydroxybenzoate carboxy-lyase (Salmonella typhi).